Here is a 173-residue protein sequence, read N- to C-terminus: Ribosome maturation factor RimM (173 aa).

The 73-residue stretch at 98-170 folds into the PRC barrel domain; sequence VGDMTWDSFI…SLTVSLPEGL (73 aa).

The protein belongs to the RimM family. In terms of assembly, binds ribosomal protein uS19.

It localises to the cytoplasm. In terms of biological role, an accessory protein needed during the final step in the assembly of 30S ribosomal subunit, possibly for assembly of the head region. Essential for efficient processing of 16S rRNA. May be needed both before and after RbfA during the maturation of 16S rRNA. It has affinity for free ribosomal 30S subunits but not for 70S ribosomes. The sequence is that of Ribosome maturation factor RimM from Parabacteroides distasonis (strain ATCC 8503 / DSM 20701 / CIP 104284 / JCM 5825 / NCTC 11152).